A 926-amino-acid chain; its full sequence is Bifunctional uridylyltransferase/uridylyl-removing enzyme (926 aa).

The interval methionine 1–lysine 379 is uridylyltransferase. The tract at residues glutamine 380–threonine 736 is uridylyl-removing. Residues valine 496–leucine 618 form the HD domain. 2 consecutive ACT domains span residues methionine 737 to serine 814 and valine 849 to lysine 926.

The protein belongs to the GlnD family. Mg(2+) serves as cofactor.

The catalysed reaction is [protein-PII]-L-tyrosine + UTP = [protein-PII]-uridylyl-L-tyrosine + diphosphate. It catalyses the reaction [protein-PII]-uridylyl-L-tyrosine + H2O = [protein-PII]-L-tyrosine + UMP + H(+). Its activity is regulated as follows. Uridylyltransferase (UTase) activity is inhibited by glutamine, while glutamine activates uridylyl-removing (UR) activity. Its function is as follows. Modifies, by uridylylation and deuridylylation, the PII regulatory proteins (GlnB and homologs), in response to the nitrogen status of the cell that GlnD senses through the glutamine level. Under low glutamine levels, catalyzes the conversion of the PII proteins and UTP to PII-UMP and PPi, while under higher glutamine levels, GlnD hydrolyzes PII-UMP to PII and UMP (deuridylylation). Thus, controls uridylylation state and activity of the PII proteins, and plays an important role in the regulation of nitrogen assimilation and metabolism. The polypeptide is Bifunctional uridylyltransferase/uridylyl-removing enzyme (Zymomonas mobilis subsp. mobilis (strain ATCC 31821 / ZM4 / CP4)).